Consider the following 192-residue polypeptide: Probable chorismate pyruvate-lyase (192 aa).

Arg85, Leu120, and Glu176 together coordinate substrate.

This sequence belongs to the UbiC family.

The protein localises to the cytoplasm. It carries out the reaction chorismate = 4-hydroxybenzoate + pyruvate. The protein operates within cofactor biosynthesis; ubiquinone biosynthesis. Functionally, removes the pyruvyl group from chorismate, with concomitant aromatization of the ring, to provide 4-hydroxybenzoate (4HB) for the ubiquinone pathway. In Pseudoalteromonas atlantica (strain T6c / ATCC BAA-1087), this protein is Probable chorismate pyruvate-lyase.